The following is a 415-amino-acid chain: Tyrosine--tRNA ligase (415 aa).

A 'HIGH' region motif is present at residues 54–63 (PTGSNIHLGH). The short motif at 248–252 (KMSKT) is the 'KMSKS' region element. Lys251 is an ATP binding site. Residues 351 to 415 (AKAFYLMSAV…GKKTFRRLTA (65 aa)) form the S4 RNA-binding domain.

Belongs to the class-I aminoacyl-tRNA synthetase family. TyrS type 2 subfamily. In terms of assembly, homodimer.

Its subcellular location is the cytoplasm. The enzyme catalyses tRNA(Tyr) + L-tyrosine + ATP = L-tyrosyl-tRNA(Tyr) + AMP + diphosphate + H(+). Functionally, catalyzes the attachment of tyrosine to tRNA(Tyr) in a two-step reaction: tyrosine is first activated by ATP to form Tyr-AMP and then transferred to the acceptor end of tRNA(Tyr). This is Tyrosine--tRNA ligase from Synechococcus sp. (strain CC9902).